The sequence spans 706 residues: MFEKPVVKSFQYGNHTVTLETGVMARQATAAVMATMDDTSVFVSVVAKKEAVAGQDFFPLTVNYQERTYAAGKIPGGFFKREGRPSEGETLTARLIDRPIRPLFPSAFKNEVQVIATVVSINPDVNPDMITMIATSAALAISGAPFNGPIGAARVGHIDGELVLNPSNTELENSKLDLVVSGTEGAVLMVESEADNLSEEEMLSAVVYGHDQQQVVIKAINEFAAEVATPSWNWEAPAVNTELKAQVAELAETRLSDAYQITEKMARYEQVGAIKNDTVEALIAQDENLDEREIRGMLGSLEKNVVRSRIIAGNPRIDGREKDMVRALDVRTGVLPRTHGSSLFTRGETQALVTATLGTQRDAQIIDSLMGEKKDNFLLHYNFPPYCVGETGFVGSPKRREIGHGKLAKRGIQAVMPSVDEFPYTVRVVSEITESNGSSSMASVCGTSLALMDAGVPIKASVAGIAMGLVKEGDDFVVLSDILGDEDHLGDMDFKVAGTNAGITALQMDIKIEGITKEIMQIALNQAQGARKHILSVMDEAISGAREDISEFAPRIHTMKISSDKIKDVIGKGGAVIRALCEETGTTIEIEDDGTIKIAATEGAAAKEAIRRIEEITAEVEVGRIYQGKVARLADFGAFVTILPGKDGLVHISQIADKRVEKVSDYLTEGQEVPVKVLEIDRQGRVRLSMKEAVETPAEGEAPAAE.

The Mg(2+) site is built by Asp487 and Asp493. The region spanning 554–613 is the KH domain; it reads PRIHTMKISSDKIKDVIGKGGAVIRALCEETGTTIEIEDDGTIKIAATEGAAAKEAIRRI. An S1 motif domain is found at 623–691; sequence GRIYQGKVAR…RQGRVRLSMK (69 aa).

This sequence belongs to the polyribonucleotide nucleotidyltransferase family. As to quaternary structure, component of the RNA degradosome, which is a multiprotein complex involved in RNA processing and mRNA degradation. Mg(2+) serves as cofactor.

The protein localises to the cytoplasm. It carries out the reaction RNA(n+1) + phosphate = RNA(n) + a ribonucleoside 5'-diphosphate. In terms of biological role, involved in mRNA degradation. Catalyzes the phosphorolysis of single-stranded polyribonucleotides processively in the 3'- to 5'-direction. This is Polyribonucleotide nucleotidyltransferase from Vibrio atlanticus (strain LGP32) (Vibrio splendidus (strain Mel32)).